A 90-amino-acid polypeptide reads, in one-letter code: Auxin-responsive protein SAUR22 (90 aa).

It belongs to the ARG7 family.

It is found in the cell membrane. Functionally, functions as a positive effector of cell expansion through modulation of auxin transport. The polypeptide is Auxin-responsive protein SAUR22 (Arabidopsis thaliana (Mouse-ear cress)).